A 393-amino-acid chain; its full sequence is NAD(P)H-quinone oxidoreductase subunit H, chloroplastic (393 aa).

The protein belongs to the complex I 49 kDa subunit family. NDH is composed of at least 16 different subunits, 5 of which are encoded in the nucleus.

It is found in the plastid. It localises to the chloroplast thylakoid membrane. The enzyme catalyses a plastoquinone + NADH + (n+1) H(+)(in) = a plastoquinol + NAD(+) + n H(+)(out). The catalysed reaction is a plastoquinone + NADPH + (n+1) H(+)(in) = a plastoquinol + NADP(+) + n H(+)(out). In terms of biological role, NDH shuttles electrons from NAD(P)H:plastoquinone, via FMN and iron-sulfur (Fe-S) centers, to quinones in the photosynthetic chain and possibly in a chloroplast respiratory chain. The immediate electron acceptor for the enzyme in this species is believed to be plastoquinone. Couples the redox reaction to proton translocation, and thus conserves the redox energy in a proton gradient. The protein is NAD(P)H-quinone oxidoreductase subunit H, chloroplastic of Zygnema circumcarinatum (Green alga).